The following is a 619-amino-acid chain: Probable pectinesterase/pectinesterase inhibitor 25 (619 aa).

An N-terminal signal peptide occupies residues 1–23 (MKMQTLNFTSSLLFLSFIFLSCA). The interval 31–84 (SPSQPHSEPPSQLPFEPPVESPFFPPSQPPIFVPPSQPPSLPPSQSQSPSLACK) is disordered. A compositionally biased stretch (pro residues) spans 37-72 (SEPPSQLPFEPPVESPFFPPSQPPIFVPPSQPPSLP). Positions 73–231 (PSQSQSPSLA…TRLYSISLGL (159 aa)) are pectinesterase inhibitor 25. Residues Asn220, Asn255, Asn312, Asn325, and Asn364 are each glycosylated (N-linked (GlcNAc...) asparagine). A pectinesterase 25 region spans residues 302–601 (AVIVGPFKSD…FTVYNFTMGD (300 aa)). Thr380 is a substrate binding site. The N-linked (GlcNAc...) asparagine glycan is linked to Asn382. Residue Gln410 coordinates substrate. Asp433 functions as the Proton donor; for pectinesterase activity in the catalytic mechanism. The cysteines at positions 447 and 467 are disulfide-linked. Asp454 (nucleophile; for pectinesterase activity) is an active-site residue. Asn500 carries an N-linked (GlcNAc...) asparagine glycan. Positions 522 and 524 each coordinate substrate. Asn550, Asn591, and Asn596 each carry an N-linked (GlcNAc...) asparagine glycan.

This sequence in the N-terminal section; belongs to the PMEI family. In the C-terminal section; belongs to the pectinesterase family. In terms of tissue distribution, expressed in siliques.

It localises to the secreted. The protein localises to the cell wall. It catalyses the reaction [(1-&gt;4)-alpha-D-galacturonosyl methyl ester](n) + n H2O = [(1-&gt;4)-alpha-D-galacturonosyl](n) + n methanol + n H(+). It functions in the pathway glycan metabolism; pectin degradation; 2-dehydro-3-deoxy-D-gluconate from pectin: step 1/5. Its function is as follows. Acts in the modification of cell walls via demethylesterification of cell wall pectin. In Arabidopsis thaliana (Mouse-ear cress), this protein is Probable pectinesterase/pectinesterase inhibitor 25 (PME25).